The primary structure comprises 108 residues: Holo-[acyl-carrier-protein] synthase (108 aa).

The Mg(2+) site is built by D9 and E54.

This sequence belongs to the P-Pant transferase superfamily. AcpS family. It depends on Mg(2+) as a cofactor.

Its subcellular location is the cytoplasm. It carries out the reaction apo-[ACP] + CoA = holo-[ACP] + adenosine 3',5'-bisphosphate + H(+). In terms of biological role, transfers the 4'-phosphopantetheine moiety from coenzyme A to a Ser of acyl-carrier-protein. This chain is Holo-[acyl-carrier-protein] synthase, found in Mycoplasmopsis pulmonis (strain UAB CTIP) (Mycoplasma pulmonis).